A 322-amino-acid chain; its full sequence is Tetraacyldisaccharide 4'-kinase (322 aa).

40 to 47 (CVGGTGKT) contacts ATP.

It belongs to the LpxK family.

The catalysed reaction is a lipid A disaccharide + ATP = a lipid IVA + ADP + H(+). Its pathway is glycolipid biosynthesis; lipid IV(A) biosynthesis; lipid IV(A) from (3R)-3-hydroxytetradecanoyl-[acyl-carrier-protein] and UDP-N-acetyl-alpha-D-glucosamine: step 6/6. Its function is as follows. Transfers the gamma-phosphate of ATP to the 4'-position of a tetraacyldisaccharide 1-phosphate intermediate (termed DS-1-P) to form tetraacyldisaccharide 1,4'-bis-phosphate (lipid IVA). In Koribacter versatilis (strain Ellin345), this protein is Tetraacyldisaccharide 4'-kinase.